The chain runs to 213 residues: Large ribosomal subunit protein uL3 (213 aa).

The interval 124–151 (KRHGQSRGPMAHGSRYHRRPGSMGSIAP) is disordered.

Belongs to the universal ribosomal protein uL3 family. As to quaternary structure, part of the 50S ribosomal subunit. Forms a cluster with proteins L14 and L19.

In terms of biological role, one of the primary rRNA binding proteins, it binds directly near the 3'-end of the 23S rRNA, where it nucleates assembly of the 50S subunit. The sequence is that of Large ribosomal subunit protein uL3 from Geobacillus kaustophilus (strain HTA426).